A 254-amino-acid chain; its full sequence is Ubiquinone/menaquinone biosynthesis C-methyltransferase UbiE (254 aa).

S-adenosyl-L-methionine is bound by residues threonine 77, aspartate 98, 126-127 (DA), and serine 143.

Belongs to the class I-like SAM-binding methyltransferase superfamily. MenG/UbiE family.

The enzyme catalyses a 2-demethylmenaquinol + S-adenosyl-L-methionine = a menaquinol + S-adenosyl-L-homocysteine + H(+). It carries out the reaction a 2-methoxy-6-(all-trans-polyprenyl)benzene-1,4-diol + S-adenosyl-L-methionine = a 5-methoxy-2-methyl-3-(all-trans-polyprenyl)benzene-1,4-diol + S-adenosyl-L-homocysteine + H(+). It participates in quinol/quinone metabolism; menaquinone biosynthesis; menaquinol from 1,4-dihydroxy-2-naphthoate: step 2/2. The protein operates within cofactor biosynthesis; ubiquinone biosynthesis. Functionally, methyltransferase required for the conversion of demethylmenaquinol (DMKH2) to menaquinol (MKH2) and the conversion of 2-polyprenyl-6-methoxy-1,4-benzoquinol (DDMQH2) to 2-polyprenyl-3-methyl-6-methoxy-1,4-benzoquinol (DMQH2). The protein is Ubiquinone/menaquinone biosynthesis C-methyltransferase UbiE of Blochmanniella pennsylvanica (strain BPEN).